The chain runs to 415 residues: Hydroxysteroid dehydrogenase-like protein 2 (415 aa).

Residues 17–23 (GASRGIG), lysine 42, and aspartate 74 each bind NADP(+). The active-site Proton acceptor is the tyrosine 168. Residue lysine 172 coordinates NADP(+). Residues 304–412 (AGPVSEMFNT…KLEKMMAMMK (109 aa)) form the SCP2 domain.

The protein belongs to the short-chain dehydrogenases/reductases (SDR) family.

Its subcellular location is the peroxisome. It localises to the mitochondrion. Has apparently no steroid dehydrogenase activity. Might act as a metabolic regulator that affects systemic adaptation to nutritional cues. This chain is Hydroxysteroid dehydrogenase-like protein 2 (hsdl2), found in Danio rerio (Zebrafish).